Here is a 166-residue protein sequence, read N- to C-terminus: HTH-type transcriptional regulator PecS (166 aa).

The HTH marR-type domain maps to 25–160; sequence PMLVIGTLSR…LRALLGRVEK (136 aa).

Its subcellular location is the cytoplasm. Its activity is regulated as follows. The presence of PecM is required to ensure the full regulation of the pecS-pecM intergenic region by PecS. Functionally, negatively regulates the expression of genes encoding pectinase and cellulase, which play a major role in virulence, and the expression of the blue pigment indigoidine, which is implicated in pathogenicity and protection from oxidative stress. Represses the expression of genes involved in indigoidine biosynthesis by binding to indA and indC promoter regions. Also binds to promoter sites in the pecS-pecM intergenic region and negatively autoregulates its expression as well as that of pecM. In Dickeya dadantii (strain 3937) (Erwinia chrysanthemi (strain 3937)), this protein is HTH-type transcriptional regulator PecS.